Consider the following 269-residue polypeptide: Meiotic drive suppressor wtf5 (269 aa).

Residues 1-67 (MKNNHTSLKS…HRENHSYRTT (67 aa)) form a disordered region. Residues 19–30 (KTDHEIDLEKGP) show a composition bias toward basic and acidic residues. 5 helical membrane-spanning segments follow: residues 73 to 93 (LLIK…PAVC), 110 to 130 (WTLF…LTYF), 140 to 160 (VTVI…AQCV), 174 to 194 (WENM…VGSP), and 216 to 236 (IIFV…PGSI).

The protein belongs to the WTF family. As to quaternary structure, homomer. Interacts with other proteins that exhibit high sequence similarity.

It localises to the spore membrane. The protein localises to the vacuole membrane. Its function is as follows. Acts as a suppressor component of the dual wtf meiotic drive system, and can suppress but not confer meiotic drive by compatible poisons. Wtf meiotic drive systems promote unequal transmission of alleles from the parental zygote to progeny spores by encoding a poison and an antidote from the same locus; the poison is trans-acting and forms toxic aggregates in all spores within an ascus, wherease the antidote is spore-specific and targets aggregates for degradation by the vacuole. Meiotic drive by wtf systems therefore lead to poisoning of all progeny that do not inherit the dual poison/antidote allele, or express a compatible antidote. This is Meiotic drive suppressor wtf5 from Schizosaccharomyces kambucha (Fission yeast).